The primary structure comprises 115 residues: Ribonuclease P protein component (115 aa).

This sequence belongs to the RnpA family. Consists of a catalytic RNA component (M1 or rnpB) and a protein subunit.

The enzyme catalyses Endonucleolytic cleavage of RNA, removing 5'-extranucleotides from tRNA precursor.. RNaseP catalyzes the removal of the 5'-leader sequence from pre-tRNA to produce the mature 5'-terminus. It can also cleave other RNA substrates such as 4.5S RNA. The protein component plays an auxiliary but essential role in vivo by binding to the 5'-leader sequence and broadening the substrate specificity of the ribozyme. The chain is Ribonuclease P protein component from Bacillus cereus (strain G9842).